We begin with the raw amino-acid sequence, 553 residues long: HTH-type transcriptional regulator SgrR (553 aa).

Residues 1 to 113 (MSTSRLQQQF…RQMLLSQLGR (113 aa)) form the HTH marR-type domain. A DNA-binding region (H-T-H motif) is located at residues 26–49 (LQALAEVLNCSRRHVRSLLGKMQH). A solute-binding region spans residues 163–494 (ELEPDLSHHW…EELHQDIESW (332 aa)).

Activates the small RNA gene sgrS under glucose-phosphate stress conditions as well as yfdZ. Represses its own transcription under both stress and non-stress conditions. Might act as a sensor of the intracellular accumulation of phosphoglucose by binding these molecules in its C-terminal solute-binding domain. In Yersinia pestis bv. Antiqua (strain Antiqua), this protein is HTH-type transcriptional regulator SgrR.